We begin with the raw amino-acid sequence, 38 residues long: GVEINVKCTGSHQCIKPCKDAGMRFGKCINRKCHCTPK.

3 disulfide bridges follow: C8–C28, C14–C33, and C18–C35. K38 is modified (lysine amide).

Belongs to the short scorpion toxin superfamily. Potassium channel inhibitor family. Alpha-KTx 03 subfamily. In terms of tissue distribution, expressed by the venom gland.

The protein localises to the secreted. Its function is as follows. Potent inhibitor of voltage-dependent potassium channels, with a preference for Kv1.3/KCNA3 versus Kv1.2/KCNA2. This chain is Potassium channel toxin alpha-KTx 3.12, found in Androctonus amoreuxi (African fattail scorpion).